A 242-amino-acid chain; its full sequence is MRCFKATIAYDGAYFLGYAKQPNKLGVQDKIESALNALGIKSAVIAAGRTDKGVHANNQVLSFHAPKHWSADKLFYYLAPKLAPHIVLKKLEEKNFHARFDAQKRAYRYLLTKNLKTPFLAPYIACGDYGSLDLLNTALKQFTGKHDFSLFKKEGGATTNPNRIIFNAFAYTTFIMGHECVVFKIIGDAFLRSSVRLIIQACVQYSLEKITLAEIQMQIHNLKATIRTPIMANGLYLHRVYY.

The active-site Nucleophile is the D51. A substrate-binding site is contributed by Y107.

Belongs to the tRNA pseudouridine synthase TruA family. As to quaternary structure, homodimer.

It carries out the reaction uridine(38/39/40) in tRNA = pseudouridine(38/39/40) in tRNA. Functionally, formation of pseudouridine at positions 38, 39 and 40 in the anticodon stem and loop of transfer RNAs. This chain is tRNA pseudouridine synthase A, found in Helicobacter pylori (strain P12).